We begin with the raw amino-acid sequence, 104 residues long: DNA-directed RNA polymerase subunit omega (104 aa).

Belongs to the RNA polymerase subunit omega family. The RNAP catalytic core consists of 2 alpha, 1 beta, 1 beta' and 1 omega subunit. When a sigma factor is associated with the core the holoenzyme is formed, which can initiate transcription.

It catalyses the reaction RNA(n) + a ribonucleoside 5'-triphosphate = RNA(n+1) + diphosphate. In terms of biological role, promotes RNA polymerase assembly. Latches the N- and C-terminal regions of the beta' subunit thereby facilitating its interaction with the beta and alpha subunits. This chain is DNA-directed RNA polymerase subunit omega (rpoZ), found in Streptococcus pyogenes serotype M1.